The primary structure comprises 552 residues: 5'-AMP-activated protein kinase catalytic subunit alpha-2 (552 aa).

The region spanning 16 to 268 (YVLGDTLGVG…IKDIREHEWF (253 aa)) is the Protein kinase domain. ATP-binding positions include 22–30 (LGVGTFGKV) and Lys-45. Asp-139 acts as the Proton acceptor in catalysis. Position 172 is a phosphothreonine; by LKB1 and CaMKK2 (Thr-172). The residue at position 258 (Thr-258) is a Phosphothreonine. The segment at 291 to 376 (EAVKEVCEKF…PERMPPLIAD (86 aa)) is AIS. Ser-377 is modified (phosphoserine). A disordered region spans residues 477 to 521 (VEQRSGSSTPQRSCSAAGLHRPRSSFDSTTAESHSLSGSLTGSLT). The segment covering 480 to 490 (RSGSSTPQRSC) has biased composition (polar residues). Position 491 is a phosphoserine (Ser-491). A compositionally biased stretch (polar residues) spans 501 to 510 (SFDSTTAESH). The span at 511 to 521 (SLSGSLTGSLT) shows a compositional bias: low complexity.

Belongs to the protein kinase superfamily. CAMK Ser/Thr protein kinase family. SNF1 subfamily. In terms of assembly, AMPK is a heterotrimer of an alpha catalytic subunit (PRKAA1 or PRKAA2), a beta (PRKAB1 or PRKAB2) and a gamma non-catalytic subunits (PRKAG1, PRKAG2 or PRKAG3). Interacts with FNIP1 and FNIP2. Associates with internalized insulin receptor/INSR complexes on Golgi/endosomal membranes; PRKAA2/AMPK2 together with ATIC and HACD3/PTPLAD1 is proposed to be part of a signaling network regulating INSR autophosphorylation and endocytosis. Interacts with ARF6. The phosphorylated form at Thr-172 mediated by CamKK2 interacts with ACSS2. It depends on Mg(2+) as a cofactor. Ubiquitinated. Post-translationally, phosphorylated at Thr-172 by STK11/LKB1 in complex with STE20-related adapter-alpha (STRADA) pseudo kinase and CAB39. Also phosphorylated at Thr-172 by CAMKK2; triggered by a rise in intracellular calcium ions, without detectable changes in the AMP/ATP ratio. CAMKK1 can also phosphorylate Thr-172, but at much lower level. Dephosphorylated by protein phosphatase 2A and 2C (PP2A and PP2C). Phosphorylated by ULK1; leading to negatively regulate AMPK activity and suggesting the existence of a regulatory feedback loop between ULK1 and AMPK. Dephosphorylated by PPM1A and PPM1B at Thr-172 (mediated by STK11/LKB1).

It is found in the cytoplasm. The protein localises to the nucleus. The enzyme catalyses L-seryl-[protein] + ATP = O-phospho-L-seryl-[protein] + ADP + H(+). The catalysed reaction is L-threonyl-[protein] + ATP = O-phospho-L-threonyl-[protein] + ADP + H(+). It carries out the reaction L-seryl-[acetyl-CoA carboxylase] + ATP = O-phospho-L-seryl-[acetyl-CoA carboxylase] + ADP + H(+). It catalyses the reaction L-seryl-[3-hydroxy-3-methylglutaryl-coenzyme A reductase] + ATP = O-phospho-L-seryl-[3-hydroxy-3-methylglutaryl-coenzyme A reductase] + ADP + H(+). Its activity is regulated as follows. Activated by phosphorylation on Thr-172. Binding of AMP to non-catalytic gamma subunit (PRKAG1, PRKAG2 or PRKAG3) results in allosteric activation, inducing phosphorylation on Thr-172. AMP-binding to gamma subunit also sustains activity by preventing dephosphorylation of Thr-172. ADP also stimulates Thr-172 phosphorylation, without stimulating already phosphorylated AMPK. ATP promotes dephosphorylation of Thr-172, rendering the enzyme inactive. Under physiological conditions AMPK mainly exists in its inactive form in complex with ATP, which is much more abundant than AMP. AMPK is activated by antihyperglycemic drug metformin, a drug prescribed to patients with type 2 diabetes: in vivo, metformin seems to mainly inhibit liver gluconeogenesis. However, metformin can be used to activate AMPK in muscle and other cells in culture or ex vivo. Selectively inhibited by compound C (6-[4-(2-Piperidin-1-yl-ethoxy)-phenyl)]-3-pyridin-4-yl-pyyrazolo[1,5-a] pyrimidine. Activated by resveratrol, a natural polyphenol present in red wine, and S17834, a synthetic polyphenol. Salicylate/aspirin directly activates kinase activity, primarily by inhibiting Thr-172 dephosphorylation. Functionally, catalytic subunit of AMP-activated protein kinase (AMPK), an energy sensor protein kinase that plays a key role in regulating cellular energy metabolism. In response to reduction of intracellular ATP levels, AMPK activates energy-producing pathways and inhibits energy-consuming processes: inhibits protein, carbohydrate and lipid biosynthesis, as well as cell growth and proliferation. AMPK acts via direct phosphorylation of metabolic enzymes, and by longer-term effects via phosphorylation of transcription regulators. Regulates lipid synthesis by phosphorylating and inactivating lipid metabolic enzymes such as ACACA, ACACB, GYS1, HMGCR and LIPE; regulates fatty acid and cholesterol synthesis by phosphorylating acetyl-CoA carboxylase (ACACA and ACACB) and hormone-sensitive lipase (LIPE) enzymes, respectively. Promotes lipolysis of lipid droplets by mediating phosphorylation of isoform 1 of CHKA (CHKalpha2). Regulates insulin-signaling and glycolysis by phosphorylating IRS1, PFKFB2 and PFKFB3. Involved in insulin receptor/INSR internalization. AMPK stimulates glucose uptake in muscle by increasing the translocation of the glucose transporter SLC2A4/GLUT4 to the plasma membrane, possibly by mediating phosphorylation of TBC1D4/AS160. Regulates transcription and chromatin structure by phosphorylating transcription regulators involved in energy metabolism such as CRTC2/TORC2, FOXO3, histone H2B, HDAC5, MEF2C, MLXIPL/ChREBP, EP300, HNF4A, p53/TP53, SREBF1, SREBF2 and PPARGC1A. Acts as a key regulator of glucose homeostasis in liver by phosphorylating CRTC2/TORC2, leading to CRTC2/TORC2 sequestration in the cytoplasm. In response to stress, phosphorylates 'Ser-36' of histone H2B (H2BS36ph), leading to promote transcription. Acts as a key regulator of cell growth and proliferation by phosphorylating FNIP1, TSC2, RPTOR, WDR24 and ATG1/ULK1: in response to nutrient limitation, negatively regulates the mTORC1 complex by phosphorylating RPTOR component of the mTORC1 complex and by phosphorylating and activating TSC2. Also phosphorylates and inhibits GATOR2 subunit WDR24 in response to nutrient limitation, leading to suppress glucose-mediated mTORC1 activation. In response to energetic stress, phosphorylates FNIP1, inactivating the non-canonical mTORC1 signaling, thereby promoting nuclear translocation of TFEB and TFE3, and inducing transcription of lysosomal or autophagy genes. In response to nutrient limitation, promotes autophagy by phosphorylating and activating ATG1/ULK1. In that process, it also activates WDR45/WIPI4. Phosphorylates CASP6, thereby preventing its autoprocessing and subsequent activation. AMPK also acts as a regulator of circadian rhythm by mediating phosphorylation of CRY1, leading to destabilize it. May regulate the Wnt signaling pathway by phosphorylating CTNNB1, leading to stabilize it. Also acts as a regulator of cellular polarity by remodeling the actin cytoskeleton; probably by indirectly activating myosin. Also phosphorylates CFTR, EEF2K, KLC1, NOS3 and SLC12A1. Plays an important role in the differential regulation of pro-autophagy (composed of PIK3C3, BECN1, PIK3R4 and UVRAG or ATG14) and non-autophagy (composed of PIK3C3, BECN1 and PIK3R4) complexes, in response to glucose starvation. Can inhibit the non-autophagy complex by phosphorylating PIK3C3 and can activate the pro-autophagy complex by phosphorylating BECN1. Upon glucose starvation, promotes ARF6 activation in a kinase-independent manner leading to cell migration. Upon glucose deprivation mediates the phosphorylation of ACSS2 at 'Ser-659', which exposes the nuclear localization signal of ACSS2, required for its interaction with KPNA1 and nuclear translocation. Upon stress, regulates mitochondrial fragmentation through phosphorylation of MTFR1L. The protein is 5'-AMP-activated protein kinase catalytic subunit alpha-2 of Homo sapiens (Human).